Here is a 1076-residue protein sequence, read N- to C-terminus: Nickel and cobalt resistance protein CnrA (1076 aa).

A run of 12 helical transmembrane segments spans residues 14-34 (WLVLFLTAVVAVIGAWQLNLL), 366-386 (TVAKNLIEGALLVVAILFALL), 390-410 (RAATIAALVIPLSLLVSAIGM), 418-438 (NLMSLGALDFGLIIDGAVIIV), 475-495 (PTVYGQLVIFMVFLPCLTFQG), 502-522 (SPMVITLMLALASAFVLSLTF), 561-581 (PMPFIGAGIATVAVATVAFTF), 903-923 (RLAIIVPLCFILIAATLYMAI), 928-948 (LTATVLTAVPLALAGGVFALL), 959-979 (AVGFIAVSGVAVLNGLVLISA), 1003-1023 (RPVLMTALVASLGFVPMAIAT), and 1035-1055 (TVVIGGLVTATVLTLFVLPAL).

Belongs to the resistance-nodulation-cell division (RND) (TC 2.A.6) family.

Its subcellular location is the cell inner membrane. Its function is as follows. The products of the genes cnrA, cnrB, and cnrC are likely to form a membrane-bound protein complex catalyzing an energy-dependent efflux of Ni(2+) and Co(2+). The mechanism of action of the CnrCBA complex may be that of a proton/cation antiporter. This is Nickel and cobalt resistance protein CnrA (cnrA) from Cupriavidus metallidurans (strain ATCC 43123 / DSM 2839 / NBRC 102507 / CH34) (Ralstonia metallidurans).